The chain runs to 449 residues: Glucose-6-phosphate isomerase (449 aa).

Catalysis depends on E291, which acts as the Proton donor. Active-site residues include H312 and K426.

The protein belongs to the GPI family.

It is found in the cytoplasm. The enzyme catalyses alpha-D-glucose 6-phosphate = beta-D-fructose 6-phosphate. The protein operates within carbohydrate biosynthesis; gluconeogenesis. It functions in the pathway carbohydrate degradation; glycolysis; D-glyceraldehyde 3-phosphate and glycerone phosphate from D-glucose: step 2/4. Its function is as follows. Catalyzes the reversible isomerization of glucose-6-phosphate to fructose-6-phosphate. This is Glucose-6-phosphate isomerase from Streptococcus pneumoniae serotype 19F (strain G54).